The following is a 430-amino-acid chain: Arrestin-related trafficking adapter 10 (430 aa).

Residues 55–75 (AEADRHSSRLPQDPQTQYTKE) form a disordered region. Over residues 63–72 (RLPQDPQTQY) the composition is skewed to polar residues.

Belongs to the ART10 family.

It is found in the cytoplasm. Its function is as follows. May regulate endocytosis by recruiting RSP5 ubiquitin ligase activity to specific plasma membrane proteins in response to extracellular stimuli. In Eremothecium gossypii (strain ATCC 10895 / CBS 109.51 / FGSC 9923 / NRRL Y-1056) (Yeast), this protein is Arrestin-related trafficking adapter 10 (ART10).